We begin with the raw amino-acid sequence, 312 residues long: MSKLSTTKICVKSPAKINLHLEIIGKRKDGYHELAMIMQNIDLSDYIEFENNQIGEIKLKSNSKDLSLDEDNLIIKAANYIKDMSKNKELGANIFLKKNIPIGAGLAGGSSNAAATLVGLNKLWDLDLDYETIFILSAKLGSDVPFFIEGGCQFCFGRGEILEKYSSNFDFGVILLKNPNISISTVDTYKKYSQEFCPKYFTETEKTNKIRNDLRVNGFNDFKLSEQRINVKNDLQVIVERENNSVKKALYLLSNLQNCLSYSMSGSGPTCFALFKDINIANEVFEQNYKMFNNNGFEAWVCKLINSGITLL.

The active site involves lysine 16. An ATP-binding site is contributed by proline 101–serine 111. Residue aspartate 143 is part of the active site.

The protein belongs to the GHMP kinase family. IspE subfamily.

The catalysed reaction is 4-CDP-2-C-methyl-D-erythritol + ATP = 4-CDP-2-C-methyl-D-erythritol 2-phosphate + ADP + H(+). It functions in the pathway isoprenoid biosynthesis; isopentenyl diphosphate biosynthesis via DXP pathway; isopentenyl diphosphate from 1-deoxy-D-xylulose 5-phosphate: step 3/6. Functionally, catalyzes the phosphorylation of the position 2 hydroxy group of 4-diphosphocytidyl-2C-methyl-D-erythritol. This is 4-diphosphocytidyl-2-C-methyl-D-erythritol kinase from Prochlorococcus marinus subsp. pastoris (strain CCMP1986 / NIES-2087 / MED4).